The sequence spans 132 residues: Large ribosomal subunit protein uL14 (132 aa).

Belongs to the universal ribosomal protein uL14 family. Part of the 50S ribosomal subunit. Forms a cluster with proteins L3 and L24e, part of which may contact the 16S rRNA in 2 intersubunit bridges.

Its function is as follows. Binds to 23S rRNA. Forms part of two intersubunit bridges in the 70S ribosome. In Methanococcus aeolicus (strain ATCC BAA-1280 / DSM 17508 / OCM 812 / Nankai-3), this protein is Large ribosomal subunit protein uL14.